The sequence spans 423 residues: Kynureninase (423 aa).

Residues leucine 105, serine 106, 133-136 (FPSD), aspartate 218, histidine 221, and tyrosine 243 contribute to the pyridoxal 5'-phosphate site. Lysine 244 is subject to N6-(pyridoxal phosphate)lysine. Residues tryptophan 273 and asparagine 301 each coordinate pyridoxal 5'-phosphate.

The protein belongs to the kynureninase family. As to quaternary structure, homodimer. Pyridoxal 5'-phosphate is required as a cofactor.

The enzyme catalyses L-kynurenine + H2O = anthranilate + L-alanine + H(+). It carries out the reaction 3-hydroxy-L-kynurenine + H2O = 3-hydroxyanthranilate + L-alanine + H(+). It functions in the pathway amino-acid degradation; L-kynurenine degradation; L-alanine and anthranilate from L-kynurenine: step 1/1. Its pathway is cofactor biosynthesis; NAD(+) biosynthesis; quinolinate from L-kynurenine: step 2/3. Functionally, catalyzes the cleavage of L-kynurenine (L-Kyn) and L-3-hydroxykynurenine (L-3OHKyn) into anthranilic acid (AA) and 3-hydroxyanthranilic acid (3-OHAA), respectively. This is Kynureninase from Xanthomonas oryzae pv. oryzae (strain KACC10331 / KXO85).